The chain runs to 414 residues: Tyrosine--tRNA ligase (414 aa).

Y35 is a binding site for L-tyrosine. Residues 40–49 (PTADSLHVGH) carry the 'HIGH' region motif. Positions 164 and 168 each coordinate L-tyrosine. Residues 226 to 230 (KFGKT) carry the 'KMSKS' region motif. K229 contacts ATP. One can recognise an S4 RNA-binding domain in the interval 347–414 (TKVIDALVEL…KKKYFVILVK (68 aa)).

The protein belongs to the class-I aminoacyl-tRNA synthetase family. TyrS type 1 subfamily. Homodimer.

Its subcellular location is the cytoplasm. It carries out the reaction tRNA(Tyr) + L-tyrosine + ATP = L-tyrosyl-tRNA(Tyr) + AMP + diphosphate + H(+). In terms of biological role, catalyzes the attachment of tyrosine to tRNA(Tyr) in a two-step reaction: tyrosine is first activated by ATP to form Tyr-AMP and then transferred to the acceptor end of tRNA(Tyr). The protein is Tyrosine--tRNA ligase of Mycoplasma capricolum subsp. capricolum (strain California kid / ATCC 27343 / NCTC 10154).